We begin with the raw amino-acid sequence, 485 residues long: Glutamyl-tRNA(Gln) amidotransferase subunit A (485 aa).

Catalysis depends on charge relay system residues lysine 79 and serine 154. Serine 178 serves as the catalytic Acyl-ester intermediate.

The protein belongs to the amidase family. GatA subfamily. Heterotrimer of A, B and C subunits.

It catalyses the reaction L-glutamyl-tRNA(Gln) + L-glutamine + ATP + H2O = L-glutaminyl-tRNA(Gln) + L-glutamate + ADP + phosphate + H(+). Its function is as follows. Allows the formation of correctly charged Gln-tRNA(Gln) through the transamidation of misacylated Glu-tRNA(Gln) in organisms which lack glutaminyl-tRNA synthetase. The reaction takes place in the presence of glutamine and ATP through an activated gamma-phospho-Glu-tRNA(Gln). The protein is Glutamyl-tRNA(Gln) amidotransferase subunit A of Clostridium botulinum (strain Loch Maree / Type A3).